We begin with the raw amino-acid sequence, 211 residues long: Protein-L-isoaspartate O-methyltransferase (211 aa).

Ser-60 is a catalytic residue.

This sequence belongs to the methyltransferase superfamily. L-isoaspartyl/D-aspartyl protein methyltransferase family.

It localises to the cytoplasm. The enzyme catalyses [protein]-L-isoaspartate + S-adenosyl-L-methionine = [protein]-L-isoaspartate alpha-methyl ester + S-adenosyl-L-homocysteine. Its function is as follows. Catalyzes the methyl esterification of L-isoaspartyl residues in peptides and proteins that result from spontaneous decomposition of normal L-aspartyl and L-asparaginyl residues. It plays a role in the repair and/or degradation of damaged proteins. The chain is Protein-L-isoaspartate O-methyltransferase from Hahella chejuensis (strain KCTC 2396).